Consider the following 241-residue polypeptide: ATP synthase subunit a (241 aa).

Transmembrane regions (helical) follow at residues 23-43 (VSFT…AAFF), 83-103 (YFPY…LGML), 113-133 (IAVT…IGFA), 188-208 (VLAG…FAVV), and 209-229 (LGVT…FTIL).

The protein belongs to the ATPase A chain family. As to quaternary structure, F-type ATPases have 2 components, CF(1) - the catalytic core - and CF(0) - the membrane proton channel. CF(1) has five subunits: alpha(3), beta(3), gamma(1), delta(1), epsilon(1). CF(0) has four main subunits: a, b, b' and c.

It localises to the cell inner membrane. In terms of biological role, key component of the proton channel; it plays a direct role in the translocation of protons across the membrane. The sequence is that of ATP synthase subunit a from Rhodospirillum rubrum (strain ATCC 11170 / ATH 1.1.1 / DSM 467 / LMG 4362 / NCIMB 8255 / S1).